We begin with the raw amino-acid sequence, 441 residues long: DNA double-strand break repair protein Mre11 (441 aa).

Aspartate 9, histidine 11, aspartate 50, and asparagine 85 together coordinate Mn(2+). Histidine 86 (proton donor) is an active-site residue. Mn(2+) contacts are provided by histidine 150, aspartate 181, and histidine 183. A disordered region spans residues 360 to 441; the sequence is ESLLSDDPDA…SRDSSLGDFA (82 aa). 2 stretches are compositionally biased toward acidic residues: residues 379–403 and 411–425; these read AEAEESESVEDAADGEDAAAVEDTA and TDTDTETTADTDSET.

It belongs to the MRE11/RAD32 family. As to quaternary structure, homodimer. Forms a heterotetramer composed of two Mre11 subunits and two Rad50 subunits. Mn(2+) is required as a cofactor.

Nuclease activity is regulated by Rad50. Its function is as follows. Part of the Rad50/Mre11 complex, which is involved in the early steps of DNA double-strand break (DSB) repair. Mre11 binds to DSB ends and has both double-stranded 3'-5' exonuclease activity and single-stranded endonuclease activity. In polyploid organisms, the Rad50/Mre11 complex appears to restrain the repair of double-strand breaks by homologous recombination, allowing another pathway to act as the primary mode of repair. This chain is DNA double-strand break repair protein Mre11, found in Haloferax volcanii (strain ATCC 29605 / DSM 3757 / JCM 8879 / NBRC 14742 / NCIMB 2012 / VKM B-1768 / DS2) (Halobacterium volcanii).